Here is a 376-residue protein sequence, read N- to C-terminus: Flagellin B (376 aa).

A coiled-coil region spans residues 103–130; it reads SNSSSERQAIQEEVSALNDELNRIAETT.

It belongs to the bacterial flagellin family. Heteromer of multiple flagellin subunits including FlaA, FlaB, FlaC, FlaD and possibly FlaE.

The protein resides in the secreted. It is found in the bacterial flagellum. Functionally, flagellin is the subunit protein which polymerizes to form the filaments of bacterial flagella. FlaB is not essential for flagellar synthesis and motility. The sequence is that of Flagellin B (flaB) from Vibrio anguillarum (Listonella anguillarum).